Reading from the N-terminus, the 124-residue chain is FK506-binding protein 1 (124 aa).

Positions glycine 23 to asparagine 122 constitute a PPIase FKBP-type domain.

It belongs to the FKBP-type PPIase family. FKBP1 subfamily.

The protein localises to the cytoplasm. It catalyses the reaction [protein]-peptidylproline (omega=180) = [protein]-peptidylproline (omega=0). With respect to regulation, inhibited by rapamycin. Its function is as follows. PPIases accelerate the folding of proteins. It catalyzes the cis-trans isomerization of proline imidic peptide bonds in oligopeptides. This chain is FK506-binding protein 1 (RBP1), found in Candida albicans (strain SC5314 / ATCC MYA-2876) (Yeast).